The sequence spans 1165 residues: Adhesion G-protein coupled receptor G6 (1165 aa).

An N-terminal signal peptide occupies residues 1–30 (MMFDTLGKRCCPWRLKPSALLFLFVLCVTC). At 31-832 (VPLSVCGCGS…ASQIDGRNTK (802 aa)) the chain is on the extracellular side. An intrachain disulfide couples cysteine 41 to cysteine 67. The CUB domain maps to 41 to 149 (CRLVLSNPSG…KGFNASYIRV (109 aa)). Glutamate 89 and aspartate 97 together coordinate Ca(2+). Cysteines 94 and 111 form a disulfide. N-linked (GlcNAc...) asparagine glycosylation is present at asparagine 121. Ca(2+) contacts are provided by aspartate 134, serine 136, and isoleucine 137. Asparagine 143 is a glycosylation site (N-linked (GlcNAc...) asparagine). Residues 154-356 (RNQKVILPQT…ALKAEGNLSC (203 aa)) enclose the Pentraxin (PTX) domain. 2 disulfide bridges follow: cysteine 186–cysteine 254 and cysteine 231–cysteine 277. N-linked (GlcNAc...) asparagine glycans are attached at residues asparagine 258, asparagine 314, asparagine 324, asparagine 353, asparagine 370, asparagine 410, asparagine 417, asparagine 424, asparagine 458, asparagine 462, and asparagine 478. Residues 446–807 (DKRLVLWALL…LDAGETICLC (362 aa)) form a mediates interaction with laminin-2 region. 2 disulfide bridges follow: cysteine 498–cysteine 533 and cysteine 521–cysteine 550. N-linked (GlcNAc...) asparagine glycans are attached at residues asparagine 536, asparagine 549, asparagine 563, asparagine 570, asparagine 665, asparagine 674, asparagine 720, asparagine 746, asparagine 781, and asparagine 788. A GAIN-B domain is found at 640 to 823 (PHVNIETQNL…GVLMDLPRSA (184 aa)). Intrachain disulfides connect cysteine 773–cysteine 805 and cysteine 792–cysteine 807. The segment at 773 to 823 (CAFWDMNKNKSFGGWNTSGCVAHSDLDAGETICLCSHFTHFGVLMDLPRSA) is GPS. The tract at residues 812-820 (HFGVLMDLP) is stachel. A helical transmembrane segment spans residues 833 to 853 (VLTFITYIGCGISAIFSAATL). At 854 to 873 (LTYVAFEKLRRDYPSKILMN) the chain is on the cytoplasmic side. A helical transmembrane segment spans residues 874–894 (LSSALLFLNLIFLLDGWVTSF). The Extracellular segment spans residues 895-899 (GVAGL). Residues 900 to 920 (CTAVAALLHFFLLATFTWMGL) form a helical membrane-spanning segment. The Cytoplasmic portion of the chain corresponds to 921-940 (EAIHMYIALVKVFNTYIHRY). Residues 941–961 (ILKFCIIGWGLPALVVSIILV) traverse the membrane as a helical segment. Over 962 to 994 (SRRQNEVYGKESYGKDQDDEFCWIQDPVVFYVS) the chain is Extracellular. Residues 995–1015 (CAGYFGVMFFLNVAMFIVVMV) form a helical membrane-spanning segment. Topologically, residues 1016 to 1039 (QICGRNGKRSNRTLREEVLRNLRS) are cytoplasmic. Residues 1040-1060 (VVSLTFLLGMTWGFAFFAWGP) form a helical membrane-spanning segment. Residues 1061-1062 (LN) lie on the Extracellular side of the membrane. Residues 1063–1083 (IPFMYLFSIFNSLQGLFIFIF) traverse the membrane as a helical segment. Asparagine 1073 is a 17alpha-hydroxyprogesterone binding site. The Cytoplasmic segment spans residues 1084-1165 (HCAMKENVQK…KRNSHSDNFS (82 aa)). A compositionally biased stretch (low complexity) spans 1126–1154 (NLGKSLSSSSIGSNSTYLTSKSKSSSTTY). A disordered region spans residues 1126-1165 (NLGKSLSSSSIGSNSTYLTSKSKSSSTTYFKRNSHSDNFS). Serine 1135 and serine 1138 each carry phosphoserine.

The protein belongs to the G-protein coupled receptor 2 family. Adhesion G-protein coupled receptor (ADGR) subfamily. In terms of assembly, heterodimer of 2 chains generated by proteolytic processing; the large extracellular N-terminal fragment and the membrane-bound C-terminal fragment predominantly remain associated and non-covalently linked. Interacts with Laminin-2; this interaction stabilizes the receptor in an inactive state. Laminin-2 polymerization could facilitate ADGRG6-NTF removal, thereby exposing the tethered agonist to drive myelination. Interacts with PRNP. Interacts with ITGB1. Interacts with LRP1. In terms of processing, proteolytically cleaved into 2 conserved sites: one in the GPS region of the GAIN-B domain (S1 site) and the other in the middle of the extracellular domain (S2 site). The proteolytic cleavage at S1 site generates an extracellular subunit and a seven-transmembrane subunit. Furin is involved in the cleavage of the S2 site generating a soluble fragment. Processing at the GPS region occurred independent of and probably prior to the cleavage at the S2 site. Proteolytic cleavage is required for activation of the receptor. As to expression, expressed at high levels in the heart, somite and otic vesicle during embryogenesis and in adult lung.

It is found in the cell membrane. With respect to regulation, forms a heterodimer of 2 chains generated by proteolytic processing that remain associated through non-covalent interactions mediated by the GAIN-B domain. In the inactivated receptor, the Stachel sequence (also named stalk) is embedded in the GAIN-B domain, where it adopts a beta-strand conformation. On activation, the Stachel moves into the 7 transmembrane region and adopts a twisted hook-shaped configuration that forms contacts within the receptor, leading to coupling of a G-alpha protein, which activates signaling. The cleaved GAIN-B and N-terminal domains can then dissociate from the rest of the receptor. Its function is as follows. Adhesion G-protein coupled receptor (aGPCR) for steroid hormones, such as progesterone and 17alpha-hydroxyprogesterone (17OHP). Involved in many biological processes, such as myelination, sprouting angiogenesis, placenta, ear and cartilage development. Ligand binding causes a conformation change that triggers signaling via guanine nucleotide-binding proteins (G proteins) and modulates the activity of downstream effectors, such as adenylate cyclase. ADGRG6 is coupled to G(i) G alpha proteins and mediates inhibition of adenylate cyclase. Also able to couple to G(q) G proteins. Involved in myelination of the peripheral nervous system: required for differentiation of promyelinating Schwann cells and for normal myelination of axons. Also acts as a regulator of body length and bone mass. Acts as a regulator of blood-brain barrier formation in the central nervous system vie its association with LRP1 and ITGB1. The sequence is that of Adhesion G-protein coupled receptor G6 from Mus musculus (Mouse).